The sequence spans 227 residues: Cytochrome c oxidase subunit 2 (227 aa).

At Met1–Ser14 the chain is on the mitochondrial intermembrane side. Residues Pro15 to Met45 form a helical membrane-spanning segment. Topologically, residues Leu46–Gln59 are mitochondrial matrix. The helical transmembrane segment at Glu60 to Met87 threads the bilayer. The Mitochondrial intermembrane segment spans residues Asp88–Leu227. The Cu cation site is built by His161, Cys196, Glu198, Cys200, His204, and Met207. Residue Glu198 participates in Mg(2+) binding. Tyr218 carries the post-translational modification Phosphotyrosine.

It belongs to the cytochrome c oxidase subunit 2 family. As to quaternary structure, component of the cytochrome c oxidase (complex IV, CIV), a multisubunit enzyme composed of 14 subunits. The complex is composed of a catalytic core of 3 subunits MT-CO1, MT-CO2 and MT-CO3, encoded in the mitochondrial DNA, and 11 supernumerary subunits COX4I, COX5A, COX5B, COX6A, COX6B, COX6C, COX7A, COX7B, COX7C, COX8 and NDUFA4, which are encoded in the nuclear genome. The complex exists as a monomer or a dimer and forms supercomplexes (SCs) in the inner mitochondrial membrane with NADH-ubiquinone oxidoreductase (complex I, CI) and ubiquinol-cytochrome c oxidoreductase (cytochrome b-c1 complex, complex III, CIII), resulting in different assemblies (supercomplex SCI(1)III(2)IV(1) and megacomplex MCI(2)III(2)IV(2)). Found in a complex with TMEM177, COA6, COX18, COX20, SCO1 and SCO2. Interacts with TMEM177 in a COX20-dependent manner. Interacts with COX20. Interacts with COX16. The cofactor is Cu cation.

The protein resides in the mitochondrion inner membrane. The catalysed reaction is 4 Fe(II)-[cytochrome c] + O2 + 8 H(+)(in) = 4 Fe(III)-[cytochrome c] + 2 H2O + 4 H(+)(out). Its function is as follows. Component of the cytochrome c oxidase, the last enzyme in the mitochondrial electron transport chain which drives oxidative phosphorylation. The respiratory chain contains 3 multisubunit complexes succinate dehydrogenase (complex II, CII), ubiquinol-cytochrome c oxidoreductase (cytochrome b-c1 complex, complex III, CIII) and cytochrome c oxidase (complex IV, CIV), that cooperate to transfer electrons derived from NADH and succinate to molecular oxygen, creating an electrochemical gradient over the inner membrane that drives transmembrane transport and the ATP synthase. Cytochrome c oxidase is the component of the respiratory chain that catalyzes the reduction of oxygen to water. Electrons originating from reduced cytochrome c in the intermembrane space (IMS) are transferred via the dinuclear copper A center (CU(A)) of subunit 2 and heme A of subunit 1 to the active site in subunit 1, a binuclear center (BNC) formed by heme A3 and copper B (CU(B)). The BNC reduces molecular oxygen to 2 water molecules using 4 electrons from cytochrome c in the IMS and 4 protons from the mitochondrial matrix. The chain is Cytochrome c oxidase subunit 2 (MT-CO2) from Daubentonia madagascariensis (Aye-aye).